Consider the following 208-residue polypeptide: Uracil phosphoribosyltransferase (208 aa).

5-phospho-alpha-D-ribose 1-diphosphate-binding positions include Arg78, Arg103, and 130–138 (DPMLATGGS). Residues Ile193 and 198–200 (GDA) contribute to the uracil site. Asp199 contributes to the 5-phospho-alpha-D-ribose 1-diphosphate binding site.

Belongs to the UPRTase family. Mg(2+) serves as cofactor.

The catalysed reaction is UMP + diphosphate = 5-phospho-alpha-D-ribose 1-diphosphate + uracil. Its pathway is pyrimidine metabolism; UMP biosynthesis via salvage pathway; UMP from uracil: step 1/1. Allosterically activated by GTP. Catalyzes the conversion of uracil and 5-phospho-alpha-D-ribose 1-diphosphate (PRPP) to UMP and diphosphate. The sequence is that of Uracil phosphoribosyltransferase from Actinobacillus succinogenes (strain ATCC 55618 / DSM 22257 / CCUG 43843 / 130Z).